Here is a 266-residue protein sequence, read N- to C-terminus: ATP synthase subunit a (266 aa).

The next 5 membrane-spanning stretches (helical) occupy residues 28–48, 88–108, 141–161, 206–226, and 237–257; these read SINV…LVIF, LIAP…LMDL, DVNI…FYSI, LFGN…LLPW, and AIFH…LTVV.

It belongs to the ATPase A chain family. As to quaternary structure, F-type ATPases have 2 components, CF(1) - the catalytic core - and CF(0) - the membrane proton channel. CF(1) has five subunits: alpha(3), beta(3), gamma(1), delta(1), epsilon(1). CF(0) has three main subunits: a(1), b(2) and c(9-12). The alpha and beta chains form an alternating ring which encloses part of the gamma chain. CF(1) is attached to CF(0) by a central stalk formed by the gamma and epsilon chains, while a peripheral stalk is formed by the delta and b chains.

Its subcellular location is the cell inner membrane. Functionally, key component of the proton channel; it plays a direct role in the translocation of protons across the membrane. This is ATP synthase subunit a from Pectobacterium carotovorum subsp. carotovorum (strain PC1).